The chain runs to 277 residues: Caspase-3 (277 aa).

Position 1 is an N-acetylmethionine (Met-1). 2 consecutive propeptides follow at residues 1–9 (MENNETSVD) and 10–28 (SKSI…KSMD). The residue at position 11 (Lys-11) is an N6-acetyllysine. Ser-26 carries the post-translational modification Phosphoserine. Residues His-121 and Cys-163 contribute to the active site. Cys-163 is modified (S-nitrosocysteine; in inhibited form).

Belongs to the peptidase C14A family. As to quaternary structure, heterotetramer that consists of two anti-parallel arranged heterodimers, each one formed by a 17 kDa (p17) and a 12 kDa (p12) subunit. Interacts with BIRC6/bruce. In terms of processing, cleavage by granzyme B, caspase-6, caspase-8 and caspase-10 generates the two active subunits. Additional processing of the propeptides is likely due to the autocatalytic activity of the activated protease. Active heterodimers between the small subunit of caspase-7 protease and the large subunit of caspase-3 also occur and vice versa. Post-translationally, S-nitrosylated on its catalytic site cysteine in unstimulated cell lines and denitrosylated upon activation of the Fas apoptotic pathway, associated with an increase in intracellular caspase activity. Fas therefore activates caspase-3 not only by inducing the cleavage of the caspase zymogen to its active subunits, but also by stimulating the denitrosylation of its active site thiol. Ubiquitinated by BIRC6; this activity is inhibited by DIABLO/SMAC.

It localises to the cytoplasm. It carries out the reaction Strict requirement for an Asp residue at positions P1 and P4. It has a preferred cleavage sequence of Asp-Xaa-Xaa-Asp-|- with a hydrophobic amino-acid residue at P2 and a hydrophilic amino-acid residue at P3, although Val or Ala are also accepted at this position.. With respect to regulation, inhibited by BIRC6; following inhibition of BIRC6-caspase binding by DIABLO/SMAC, BIRC6 is subjected to caspase cleavage, leading to an increase in active caspases. In terms of biological role, involved in the activation cascade of caspases responsible for apoptosis execution. At the onset of apoptosis, it proteolytically cleaves poly(ADP-ribose) polymerase PARP1 at a '216-Asp-|-Gly-217' bond. Cleaves and activates sterol regulatory element binding proteins (SREBPs) between the basic helix-loop-helix leucine zipper domain and the membrane attachment domain. Cleaves and activates caspase-6, -7 and -9 (CASP6, CASP7 and CASP9, respectively). Cleaves and inactivates interleukin-18 (IL18). Triggers cell adhesion in sympathetic neurons through RET cleavage. Cleaves IL-1 beta between an Asp and an Ala, releasing the mature cytokine which is involved in a variety of inflammatory processes. Cleaves and inhibits serine/threonine-protein kinase AKT1 in response to oxidative stress. Acts as an inhibitor of type I interferon production during virus-induced apoptosis by mediating cleavage of antiviral proteins CGAS, IRF3 and MAVS, thereby preventing cytokine overproduction. Also involved in pyroptosis by mediating cleavage and activation of gasdermin-E (GSDME). Cleaves XRCC4 and phospholipid scramblase proteins XKR4, XKR8 and XKR9, leading to promote phosphatidylserine exposure on apoptotic cell surface. Cleaves BIRC6 following inhibition of BIRC6-caspase binding by DIABLO/SMAC. The chain is Caspase-3 (CASP3) from Mesocricetus auratus (Golden hamster).